A 313-amino-acid polypeptide reads, in one-letter code: Porphobilinogen deaminase (313 aa).

At cysteine 242 the chain carries S-(dipyrrolylmethanemethyl)cysteine.

It belongs to the HMBS family. As to quaternary structure, monomer. Dipyrromethane is required as a cofactor.

It carries out the reaction 4 porphobilinogen + H2O = hydroxymethylbilane + 4 NH4(+). The protein operates within porphyrin-containing compound metabolism; protoporphyrin-IX biosynthesis; coproporphyrinogen-III from 5-aminolevulinate: step 2/4. In terms of biological role, tetrapolymerization of the monopyrrole PBG into the hydroxymethylbilane pre-uroporphyrinogen in several discrete steps. The chain is Porphobilinogen deaminase from Erwinia tasmaniensis (strain DSM 17950 / CFBP 7177 / CIP 109463 / NCPPB 4357 / Et1/99).